A 953-amino-acid polypeptide reads, in one-letter code: 2-oxoglutarate dehydrogenase E1 component (953 aa).

It belongs to the alpha-ketoglutarate dehydrogenase family. Homodimer. Part of the 2-oxoglutarate dehydrogenase (OGDH) complex composed of E1 (2-oxoglutarate dehydrogenase), E2 (dihydrolipoamide succinyltransferase) and E3 (dihydrolipoamide dehydrogenase); the complex contains multiple copies of the three enzymatic components (E1, E2 and E3). Requires thiamine diphosphate as cofactor.

It carries out the reaction N(6)-[(R)-lipoyl]-L-lysyl-[protein] + 2-oxoglutarate + H(+) = N(6)-[(R)-S(8)-succinyldihydrolipoyl]-L-lysyl-[protein] + CO2. Its function is as follows. E1 component of the 2-oxoglutarate dehydrogenase (OGDH) complex which catalyzes the decarboxylation of 2-oxoglutarate, the first step in the conversion of 2-oxoglutarate to succinyl-CoA and CO(2). The sequence is that of 2-oxoglutarate dehydrogenase E1 component from Oceanobacillus iheyensis (strain DSM 14371 / CIP 107618 / JCM 11309 / KCTC 3954 / HTE831).